Here is a 170-residue protein sequence, read N- to C-terminus: Anaphase-promoting complex subunit SWM1 (170 aa).

2 stretches are compositionally biased toward basic and acidic residues: residues 48 to 67 (NTRTDAEEGRAPQDGERNSN) and 132 to 141 (GANEPRKETI). Disordered regions lie at residues 48-81 (NTRTDAEEGRAPQDGERNSNVRESAQGKALMTSE) and 122-141 (LNGGTNSRNDGANEPRKETI).

This sequence belongs to the APC13 family. As to quaternary structure, the APC/C is composed of at least 13 subunits that stay tightly associated throughout the cell cycle: APC1, APC2, APC4, APC5, APC9, APC11, CDC16, CDC23, CDC26, CDC27, DOC1, MND2 and SWM1. SWM1 interacts directly with CDC23 and APC5, and is required to tether APC9, CDC16, CDC26 and CDC27 to the complex.

It participates in protein modification; protein ubiquitination. Its function is as follows. Component of the anaphase promoting complex/cyclosome (APC/C), a cell cycle-regulated E3 ubiquitin-protein ligase complex that controls progression through mitosis and the G1 phase of the cell cycle. The APC/C is thought to confer substrate specificity and, in the presence of ubiquitin-conjugating E2 enzymes, it catalyzes the formation of protein-ubiquitin conjugates that are subsequently degraded by the 26S proteasome. In early mitosis, the APC/C is activated by CDC20 and targets securin PDS1, the B-type cyclin CLB5, and other anaphase inhibitory proteins for proteolysis, thereby triggering the separation of sister chromatids at the metaphase-to-anaphase transition. In late mitosis and in G1, degradation of CLB5 allows activation of the APC/C by CDH1, which is needed to destroy CDC20 and the B-type cyclin CLB2 to allow exit from mitosis and creating the low CDK state necessary for cytokinesis and for reforming prereplicative complexes in G1 prior to another round of replication. SWM1 is required for APC/C activity in meiosis. In Saccharomyces cerevisiae (strain ATCC 204508 / S288c) (Baker's yeast), this protein is Anaphase-promoting complex subunit SWM1 (SWM1).